A 60-amino-acid polypeptide reads, in one-letter code: Metallothionein A (60 aa).

A beta region spans residues 1–28; sequence MDPCECSKSGNCNCGGSCTCTNCSCKSC. A divalent metal cation contacts are provided by Cys-4, Cys-6, Cys-12, Cys-14, Cys-18, Cys-20, Cys-23, Cys-25, Cys-28, Cys-32, Cys-33, Cys-35, Cys-36, Cys-40, Cys-43, Cys-47, Cys-49, Cys-54, Cys-58, and Cys-59. An alpha region spans residues 29–60; it reads KKSCCPCCPSGCTKCASGCVCKGKTCDTSCCQ.

This sequence belongs to the metallothionein superfamily. Type 1 family.

Functionally, metallothioneins have a high content of cysteine residues that bind various heavy metals. The polypeptide is Metallothionein A (mta) (Parachaenichthys charcoti (Charcot's dragonfish)).